Reading from the N-terminus, the 477-residue chain is PTS system glucose-specific EIICB component (477 aa).

A PTS EIIC type-1 domain is found at 1-388 (MFKNVFSSLQ…FNLKTPGREE (388 aa)). A run of 9 helical transmembrane segments spans residues 20 to 40 (VSVLPIAGILLGIGSAHFTLI), 51 to 71 (TGGSIFSNMPLIFAIGVALGF), 76 to 96 (GVAALAAVVAYSILIQTLSAV), 112 to 132 (NFSDIGILGGIIAGAISAYMF), 152 to 172 (FVPIISGLFAIFVGLILSLIW), 250 to 270 (LSGGFIFKMYGLPGAALAIWH), 280 to 300 (IGSIMISAALTAFLTGITEPI), 304 to 324 (FILVAPILYIIHAILAGLSFP), and 354 to 374 (IFLFPIVGICYGLLYYSIFYF). The PTS EIIB type-1 domain occupies 399–477 (IEIAPYIVEA…TAIDEYINNI (79 aa)). Catalysis depends on C421, which acts as the Phosphocysteine intermediate; for EIIB activity. At C421 the chain carries Phosphocysteine.

It localises to the cell inner membrane. It carries out the reaction N(pros)-phospho-L-histidyl-[protein] + D-glucose(out) = D-glucose 6-phosphate(in) + L-histidyl-[protein]. Its function is as follows. The phosphoenolpyruvate-dependent sugar phosphotransferase system (sugar PTS), a major carbohydrate active transport system, catalyzes the phosphorylation of incoming sugar substrates concomitantly with their translocation across the cell membrane. The enzyme II complex composed of PtsG and Crr is involved in glucose transport. The chain is PTS system glucose-specific EIICB component (ptsG) from Buchnera aphidicola subsp. Schizaphis graminum (strain Sg).